Here is a 244-residue protein sequence, read N- to C-terminus: L-xylulose reductase (244 aa).

Met1 is subject to N-acetylmethionine. 11 to 40 contributes to the NADP(+) binding site; it reads LVTGAGKGIGRGTVQALHATGARVVAVSRT. Arg21 carries the post-translational modification Omega-N-methylarginine. Ser46 carries the post-translational modification Phosphoserine. Position 136 (Ser136) interacts with substrate. The Proton acceptor role is filled by Tyr149. Lys153 is an NADP(+) binding site.

Belongs to the short-chain dehydrogenases/reductases (SDR) family. Homotetramer. Highly expressed in kidney, liver and epididymis. In the epididymis, it is mainly expressed in the proximal and distal sections of the corpus region. Weakly or not expressed in brain, lung, heart, spleen and testis.

It is found in the membrane. The enzyme catalyses xylitol + NADP(+) = L-xylulose + NADPH + H(+). Catalyzes the NADPH-dependent reduction of several pentoses, tetroses, trioses, alpha-dicarbonyl compounds and L-xylulose. Participates in the uronate cycle of glucose metabolism. May play a role in the water absorption and cellular osmoregulation in the proximal renal tubules by producing xylitol, an osmolyte, thereby preventing osmolytic stress from occurring in the renal tubules. The sequence is that of L-xylulose reductase (DCXR) from Homo sapiens (Human).